The following is a 509-amino-acid chain: Coiled-coil domain-containing protein 181 (509 aa).

Disordered stretches follow at residues 1–122 (MDED…EDEE) and 237–369 (FLPP…EKKK). Composition is skewed to basic and acidic residues over residues 22 to 33 (DLEWLINDKEKS) and 41 to 56 (ACKK…KENE). Polar residues predominate over residues 60–69 (ELGQQLSDPD). Composition is skewed to basic and acidic residues over residues 70–82 (NSPK…RRND) and 266–275 (IKKEESEAKG). Positions 319–333 (RIQSAGVSPVTSTYC) are enriched in polar residues. 2 coiled-coil regions span residues 335–377 (SPRQ…VFKA) and 418–488 (LKKK…RSKQ). The segment covering 337-369 (RQKELQKQLERKREKLKREEEQRKLEEENEKKK) has biased composition (basic and acidic residues).

This sequence belongs to the CCDC181 family. As to quaternary structure, homodimer. Interacts with HOOK1. Interacts with HOOK2. Interacts with HOOK3. Predominantly expressed in testis. Expressed at lower level in brain, eye, trachea and lung. Barely expressed in tongue, heart, liver, kidney, spleen and muscle. Present at high level in elongating spermatids, whereas lower levels are observed in round spermatids (at protein level).

The protein localises to the cytoplasm. Its subcellular location is the cytoskeleton. It is found in the cell projection. It localises to the cilium. The protein resides in the flagellum. Functionally, microtubule-binding protein that localizes to the microtubular manchette of elongating spermatids. This Mus musculus (Mouse) protein is Coiled-coil domain-containing protein 181.